Here is a 414-residue protein sequence, read N- to C-terminus: Histidine--tRNA ligase (414 aa).

It belongs to the class-II aminoacyl-tRNA synthetase family. In terms of assembly, homodimer.

The protein resides in the cytoplasm. It catalyses the reaction tRNA(His) + L-histidine + ATP = L-histidyl-tRNA(His) + AMP + diphosphate + H(+). The chain is Histidine--tRNA ligase from Ehrlichia ruminantium (strain Gardel).